The sequence spans 437 residues: Protein disulfide-isomerase tmx3a (437 aa).

The first 21 residues, Met1–Gly21, serve as a signal peptide directing secretion. One can recognise a Thioredoxin domain in the interval Tyr22–Gly126. The Extracellular segment spans residues Tyr22–Thr368. Residues Cys48 and Cys51 each act as nucleophile in the active site. Cysteines 48 and 51 form a disulfide. N-linked (GlcNAc...) asparagine glycosylation occurs at Asn308. The helical transmembrane segment at Ala369–Tyr389 threads the bilayer. Residues Ala390–Asp437 are Cytoplasmic-facing. The segment at Asp398–Asp437 is disordered. The segment covering Thr414–Asp437 has biased composition (basic and acidic residues). Positions Lys434 to Asp437 match the Di-lysine motif motif.

The protein resides in the endoplasmic reticulum membrane. It catalyses the reaction Catalyzes the rearrangement of -S-S- bonds in proteins.. In terms of biological role, probable disulfide isomerase, which participates in the folding of proteins containing disulfide bonds. May act as a dithiol oxidase. Acts as a regulator of endoplasmic reticulum-mitochondria contact sites via its ability to regulate redox signals. This is Protein disulfide-isomerase tmx3a (tmx3a) from Danio rerio (Zebrafish).